Consider the following 148-residue polypeptide: Large ribosomal subunit protein bL9 (148 aa).

This sequence belongs to the bacterial ribosomal protein bL9 family.

Its function is as follows. Binds to the 23S rRNA. The sequence is that of Large ribosomal subunit protein bL9 from Pseudomonas fluorescens (strain Pf0-1).